Consider the following 300-residue polypeptide: 4-hydroxy-tetrahydrodipicolinate synthase (300 aa).

Pyruvate is bound at residue Thr-55. Tyr-143 serves as the catalytic Proton donor/acceptor. Residue Lys-171 is the Schiff-base intermediate with substrate of the active site. Ile-211 lines the pyruvate pocket.

The protein belongs to the DapA family. Homotetramer; dimer of dimers.

Its subcellular location is the cytoplasm. It catalyses the reaction L-aspartate 4-semialdehyde + pyruvate = (2S,4S)-4-hydroxy-2,3,4,5-tetrahydrodipicolinate + H2O + H(+). It participates in amino-acid biosynthesis; L-lysine biosynthesis via DAP pathway; (S)-tetrahydrodipicolinate from L-aspartate: step 3/4. Its function is as follows. Catalyzes the condensation of (S)-aspartate-beta-semialdehyde [(S)-ASA] and pyruvate to 4-hydroxy-tetrahydrodipicolinate (HTPA). This chain is 4-hydroxy-tetrahydrodipicolinate synthase, found in Mycolicibacterium paratuberculosis (strain ATCC BAA-968 / K-10) (Mycobacterium paratuberculosis).